We begin with the raw amino-acid sequence, 88 residues long: Pape peptide (88 aa).

The first 22 residues, Met-1–Ser-22, serve as a signal peptide directing secretion. A propeptide spanning residues Phe-23–Gly-45 is cleaved from the precursor. Residues Leu-49–Arg-88 are disordered. Residues Glu-56 to Glu-68 are compositionally biased toward pro residues. PAPE repeat units follow at residues Pro-57–Glu-60, Pro-61–Glu-64, and Pro-65–Glu-68. Residues Ala-69–Ala-81 are compositionally biased toward low complexity.

In terms of tissue distribution, expressed by the venom gland.

The protein resides in the secreted. This Tityus serrulatus (Brazilian scorpion) protein is Pape peptide.